The following is a 778-amino-acid chain: Lon protease (778 aa).

The Lon N-terminal domain maps to 4–187 (LPVLPLTDAV…LLVGWVRAHL (184 aa)). 346–353 (GPPGVGKT) contacts ATP. Positions 581–762 (TAVPGVATGL…ADVLALALRP (182 aa)) constitute a Lon proteolytic domain. Active-site residues include Ser-668 and Lys-711.

The protein belongs to the peptidase S16 family. Homohexamer. Organized in a ring with a central cavity.

The protein localises to the cytoplasm. It catalyses the reaction Hydrolysis of proteins in presence of ATP.. ATP-dependent serine protease that mediates the selective degradation of mutant and abnormal proteins as well as certain short-lived regulatory proteins. Required for cellular homeostasis and for survival from DNA damage and developmental changes induced by stress. Degrades polypeptides processively to yield small peptide fragments that are 5 to 10 amino acids long. Binds to DNA in a double-stranded, site-specific manner. This chain is Lon protease, found in Salinispora arenicola (strain CNS-205).